We begin with the raw amino-acid sequence, 227 residues long: UPF0758 protein Spro_4842 (227 aa).

The 123-residue stretch at 105-227 folds into the MPN domain; it reads AMLNPRMTQH…CVSFAERGWL (123 aa). 3 residues coordinate Zn(2+): H176, H178, and D189. A JAMM motif motif is present at residues 176–189; that stretch reads HNHPSGKAEPSHAD.

It belongs to the UPF0758 family. YicR subfamily.

The sequence is that of UPF0758 protein Spro_4842 from Serratia proteamaculans (strain 568).